Here is a 678-residue protein sequence, read N- to C-terminus: Glycine--tRNA ligase beta subunit (678 aa).

The protein belongs to the class-II aminoacyl-tRNA synthetase family. Tetramer of two alpha and two beta subunits.

It is found in the cytoplasm. The enzyme catalyses tRNA(Gly) + glycine + ATP = glycyl-tRNA(Gly) + AMP + diphosphate. The sequence is that of Glycine--tRNA ligase beta subunit from Streptococcus pneumoniae serotype 19F (strain G54).